Here is a 116-residue protein sequence, read N- to C-terminus: Tyrosine-protein phosphatase 14 (116 aa).

In terms of domain architecture, Tyrosine-protein phosphatase spans 1–116 (WRMITQEKAQ…SLKNPGPVIV (116 aa)). Substrate is bound at residue Asp-84.

It belongs to the protein-tyrosine phosphatase family.

It carries out the reaction O-phospho-L-tyrosyl-[protein] + H2O = L-tyrosyl-[protein] + phosphate. The sequence is that of Tyrosine-protein phosphatase 14 (STY-14) from Styela plicata (Wrinkled sea squirt).